Consider the following 374-residue polypeptide: Very late expression factor 1 (374 aa).

Positions 169-349 (AIDTILNFID…NFDESSSDEE (181 aa)) constitute a Tyr recombinase domain. Catalysis depends on residues R210, K239, R303, and H326. Residues 328–374 (SPASTKPYLNKYNFDESSSDEESGGNNRDSSTGSSANSSSLYYQTGD) are disordered. Y335 functions as the O-(3'-phospho-DNA)-tyrosine intermediate in the catalytic mechanism. A compositionally biased stretch (low complexity) spans 357–367 (SSTGSSANSSS).

This sequence belongs to the 'phage' integrase family.

Its function is as follows. Involved in very late gene activation. In Orgyia pseudotsugata (Douglas-fir tussock moth), this protein is Very late expression factor 1 (VLF-1).